The sequence spans 177 residues: Large ribosomal subunit protein uL6 (177 aa).

Belongs to the universal ribosomal protein uL6 family. Part of the 50S ribosomal subunit.

Functionally, this protein binds to the 23S rRNA, and is important in its secondary structure. It is located near the subunit interface in the base of the L7/L12 stalk, and near the tRNA binding site of the peptidyltransferase center. The protein is Large ribosomal subunit protein uL6 of Janthinobacterium sp. (strain Marseille) (Minibacterium massiliensis).